A 1083-amino-acid polypeptide reads, in one-letter code: FACT complex subunit spt16 (1083 aa).

Phosphoserine is present on Ser437. A coiled-coil region spans residues 466 to 504 (LESKLRNEINTEEKRKEHQRELAQQLNERAKDRLARQGN). Residues 923–1083 (FEQGGWTFLD…NGHKSKKSRH (161 aa)) are disordered. A compositionally biased stretch (acidic residues) spans 935 to 987 (SGSEGENETAESEEDEAYNPTDAESDEESDEDSEYSEASEDSEESDEDLGSDE). Over residues 988–1023 (ESGKDWSDLEREAAEEDRNHDYAADDKPRNGKFDSK) the composition is skewed to basic and acidic residues. The segment covering 1024–1033 (KHGKSSKHSP) has biased composition (basic residues). Positions 1058-1076 (SSKDKDRKRSRDDSRDNGH) are enriched in basic and acidic residues.

This sequence belongs to the peptidase M24 family. SPT16 subfamily. Component of the FACT complex, a stable heterodimer of dre4/spt16 and Ssrp. Interacts with TRL/GAGA.

It is found in the nucleus. It localises to the chromosome. Component of the FACT complex, a general chromatin factor that acts to reorganize nucleosomes. The FACT complex is involved in multiple processes that require DNA as a template such as mRNA elongation, DNA replication and DNA repair. During transcription elongation the FACT complex acts as a histone chaperone that both destabilizes and restores nucleosomal structure. It facilitates the passage of RNA polymerase II and transcription by promoting the dissociation of one histone H2A-H2B dimer from the nucleosome, then subsequently promotes the reestablishment of the nucleosome following the passage of RNA polymerase II. The FACT complex is required for expression of Hox genes. The chain is FACT complex subunit spt16 (dre4) from Drosophila melanogaster (Fruit fly).